Consider the following 115-residue polypeptide: Hydrogenase maturation factor HypA (115 aa).

Residue His2 coordinates Ni(2+). Zn(2+) is bound by residues Cys73, Cys76, Cys89, and Cys92.

This sequence belongs to the HypA/HybF family.

Functionally, involved in the maturation of [NiFe] hydrogenases. Required for nickel insertion into the metal center of the hydrogenase. The sequence is that of Hydrogenase maturation factor HypA from Polaromonas naphthalenivorans (strain CJ2).